The sequence spans 278 residues: Rhomboid protease GlpG (278 aa).

The next 6 helical transmembrane spans lie at 94–114, 143–163, 175–195, 196–216, 224–241, and 245–267; these read AGPL…LMLI, AFLH…WYLG, LLVL…LFSG, ANFG…WLTG, ISLP…LIAG, and ILGL…LMAF. Ser202 serves as the catalytic Nucleophile. Residue His255 is part of the active site.

Belongs to the peptidase S54 family.

It is found in the cell inner membrane. The catalysed reaction is Cleaves type-1 transmembrane domains using a catalytic dyad composed of serine and histidine that are contributed by different transmembrane domains.. Its function is as follows. Rhomboid-type serine protease that catalyzes intramembrane proteolysis. This Yersinia pestis bv. Antiqua (strain Antiqua) protein is Rhomboid protease GlpG.